A 346-amino-acid polypeptide reads, in one-letter code: Phosphoribosylformylglycinamidine cyclo-ligase (346 aa).

The protein belongs to the AIR synthase family.

It localises to the cytoplasm. It carries out the reaction 2-formamido-N(1)-(5-O-phospho-beta-D-ribosyl)acetamidine + ATP = 5-amino-1-(5-phospho-beta-D-ribosyl)imidazole + ADP + phosphate + H(+). The protein operates within purine metabolism; IMP biosynthesis via de novo pathway; 5-amino-1-(5-phospho-D-ribosyl)imidazole from N(2)-formyl-N(1)-(5-phospho-D-ribosyl)glycinamide: step 2/2. This is Phosphoribosylformylglycinamidine cyclo-ligase from Bacillus cereus (strain B4264).